Here is a 391-residue protein sequence, read N- to C-terminus: Succinyl-diaminopimelate desuccinylase (391 aa).

His-78 provides a ligand contact to Zn(2+). Asp-80 is an active-site residue. Asp-111 contributes to the Zn(2+) binding site. Catalysis depends on Glu-145, which acts as the Proton acceptor. The Zn(2+) site is built by Glu-146, Glu-174, and His-360.

This sequence belongs to the peptidase M20A family. DapE subfamily. Homodimer. Zn(2+) is required as a cofactor. It depends on Co(2+) as a cofactor.

The catalysed reaction is N-succinyl-(2S,6S)-2,6-diaminopimelate + H2O = (2S,6S)-2,6-diaminopimelate + succinate. It participates in amino-acid biosynthesis; L-lysine biosynthesis via DAP pathway; LL-2,6-diaminopimelate from (S)-tetrahydrodipicolinate (succinylase route): step 3/3. Functionally, catalyzes the hydrolysis of N-succinyl-L,L-diaminopimelic acid (SDAP), forming succinate and LL-2,6-diaminopimelate (DAP), an intermediate involved in the bacterial biosynthesis of lysine and meso-diaminopimelic acid, an essential component of bacterial cell walls. The protein is Succinyl-diaminopimelate desuccinylase of Albidiferax ferrireducens (strain ATCC BAA-621 / DSM 15236 / T118) (Rhodoferax ferrireducens).